The sequence spans 625 residues: tRNA uridine 5-carboxymethylaminomethyl modification enzyme MnmG (625 aa).

FAD-binding positions include glycine 13–glycine 18, valine 125, and serine 182. Glycine 276 to phenylalanine 290 lines the NAD(+) pocket. Glutamine 373 is an FAD binding site.

It belongs to the MnmG family. In terms of assembly, homodimer. Heterotetramer of two MnmE and two MnmG subunits. FAD is required as a cofactor.

The protein localises to the cytoplasm. In terms of biological role, NAD-binding protein involved in the addition of a carboxymethylaminomethyl (cmnm) group at the wobble position (U34) of certain tRNAs, forming tRNA-cmnm(5)s(2)U34. The chain is tRNA uridine 5-carboxymethylaminomethyl modification enzyme MnmG from Lactococcus lactis subsp. cremoris (strain SK11).